The sequence spans 543 residues: Mannuronan C5-epimerase (543 aa).

Positions 1 to 35 (MPDISLSIPRRRLPRLRPLAAAVLGAVLLHGQAWA) are cleaved as a signal peptide. PbH1 repeat units follow at residues 243–270 (GAEV…SISQ), 283–304 (RPKG…YCYE), 305–327 (ADDL…DPHD), 329–352 (SHRL…IVSR), 354–376 (VNDS…VLDR), 378–400 (SEGN…TLYE), and 401–423 (SGDN…RVRN). Catalysis depends on His326, which acts as the Proton acceptor.

The protein belongs to the D-mannuronate C5-epimerase family.

It localises to the periplasm. The catalysed reaction is [(1-&gt;4)-beta-D-mannuronosyl](n) = [alginate](n). The protein operates within glycan biosynthesis; alginate biosynthesis. With respect to regulation, inhibited by the presence of acetyl groups on the substrate. Its function is as follows. Catalyzes the epimerization of beta-D-mannuronate to alpha-L-guluronate during the synthesis of the linear polysaccharide alginate. In addition, is part of a periplasmic protein complex that protects alginate from degradation by AlgL by channeling the newly formed alginate polymer through a scaffold that transfers the alginate polymer through the periplasmic space to the outer membrane secretin AlgE. The protein is Mannuronan C5-epimerase of Pseudomonas aeruginosa (strain ATCC 15692 / DSM 22644 / CIP 104116 / JCM 14847 / LMG 12228 / 1C / PRS 101 / PAO1).